The following is a 360-amino-acid chain: Putative F-box protein At5g55150 (360 aa).

Residues 6–54 (SSWSEFLPELLNTVFHNLNDARDILNCATVCSSWKDSSSAVYYSRTFSP) form the F-box domain.

This chain is Putative F-box protein At5g55150, found in Arabidopsis thaliana (Mouse-ear cress).